The primary structure comprises 137 residues: Nucleoside diphosphate kinase (137 aa).

Positions 9, 57, 85, 91, 102, and 112 each coordinate ATP. Histidine 115 (pros-phosphohistidine intermediate) is an active-site residue.

It belongs to the NDK family. Homotetramer. It depends on Mg(2+) as a cofactor.

The protein resides in the cytoplasm. It carries out the reaction a 2'-deoxyribonucleoside 5'-diphosphate + ATP = a 2'-deoxyribonucleoside 5'-triphosphate + ADP. The catalysed reaction is a ribonucleoside 5'-diphosphate + ATP = a ribonucleoside 5'-triphosphate + ADP. Major role in the synthesis of nucleoside triphosphates other than ATP. The ATP gamma phosphate is transferred to the NDP beta phosphate via a ping-pong mechanism, using a phosphorylated active-site intermediate. The polypeptide is Nucleoside diphosphate kinase (Leptospira borgpetersenii serovar Hardjo-bovis (strain L550)).